A 100-amino-acid polypeptide reads, in one-letter code: Small ribosomal subunit protein uS14c (100 aa).

Belongs to the universal ribosomal protein uS14 family. As to quaternary structure, part of the 30S ribosomal subunit.

It is found in the plastid. The protein resides in the chloroplast. Functionally, binds 16S rRNA, required for the assembly of 30S particles. In Pelargonium hortorum (Common geranium), this protein is Small ribosomal subunit protein uS14c.